The sequence spans 69 residues: Sperm protamine P1 (69 aa).

The segment at 1-69 (MARYRHSRSR…YSRRRRRRYY (69 aa)) is disordered.

It belongs to the protamine P1 family. In terms of tissue distribution, testis.

The protein resides in the nucleus. The protein localises to the chromosome. Its function is as follows. Protamines substitute for histones in the chromatin of sperm during the haploid phase of spermatogenesis. They compact sperm DNA into a highly condensed, stable and inactive complex. The protein is Sperm protamine P1 (PRM1) of Pseudochirops cupreus (Coppery ringtail).